Consider the following 152-residue polypeptide: Transcriptional regulator MraZ (152 aa).

2 SpoVT-AbrB domains span residues 5–52 (ATLV…PLPE) and 81–124 (ASEC…DETT).

The protein belongs to the MraZ family. In terms of assembly, forms oligomers.

Its subcellular location is the cytoplasm. The protein localises to the nucleoid. In terms of biological role, negatively regulates its own expression and that of the subsequent genes in the proximal part of the division and cell wall (dcw) gene cluster. Acts by binding directly to DNA. May also regulate the expression of genes outside the dcw cluster. In Shigella dysenteriae serotype 1 (strain Sd197), this protein is Transcriptional regulator MraZ.